Consider the following 1023-residue polypeptide: Sodium/potassium-transporting ATPase subunit alpha-1 (1023 aa).

Residues Met1–Val5 constitute a propeptide that is removed on maturation. The segment covering Met1–Glu11 has biased composition (basic and acidic residues). The tract at residues Met1 to Val39 is disordered. The Cytoplasmic segment spans residues Gly6 to Pro87. Lys9 is modified (N6-acetyllysine). Tyr10 is modified (phosphotyrosine). Ser16 is subject to Phosphoserine. Lys21 carries the post-translational modification N6-acetyllysine. Residues Lys28–Val39 are compositionally biased toward basic and acidic residues. Ser40 and Ser47 each carry phosphoserine. Residues Pro82–Pro84 form a phosphoinositide-3 kinase binding region. Residues Glu88–Ala108 form a helical membrane-spanning segment. At Ile109–Tyr131 the chain is on the extracellular side. The helical transmembrane segment at Leu132–Ala152 threads the bilayer. Over Lys153–Ile288 the chain is Cytoplasmic. Positions Ser216–Asn235 are disordered. Position 228 is a phosphoserine (Ser228). Tyr260 bears the Phosphotyrosine mark. Residues Glu289 to Ile308 form a helical membrane-spanning segment. Residues Leu309 to Ala320 are Extracellular-facing. Residues Val321 to Ala338 traverse the membrane as a helical segment. Over Thr339 to Leu772 the chain is Cytoplasmic. Asp376 functions as the 4-aspartylphosphate intermediate in the catalytic mechanism. Phosphoserine is present on residues Ser452 and Ser484. Residue Lys487 coordinates ATP. Tyr542 carries the phosphotyrosine modification. The tract at residues Arg596 to Asp717 is mediates interaction with SCN7A. Position 661 is an N6-succinyllysine (Lys661). Residues Ser668 and Ser675 each carry the phosphoserine modification. The Mg(2+) site is built by Asp717 and Asp721. The chain crosses the membrane as a helical span at residues Lys773–Ile792. Topologically, residues Phe793–Leu802 are extracellular. Residues Gly803–Ala823 form a helical membrane-spanning segment. Over Tyr824–Lys843 the chain is Cytoplasmic. The helical transmembrane segment at Leu844–Phe866 threads the bilayer. The Extracellular portion of the chain corresponds to Phe867–Cys918. The helical transmembrane segment at His919–Lys938 threads the bilayer. Residues Thr939–Asn951 lie on the Cytoplasmic side of the membrane. Ser943 carries the phosphoserine; by PKA modification. Residues Lys952 to Tyr970 form a helical membrane-spanning segment. Over Cys971 to Pro985 the chain is Extracellular. A helical transmembrane segment spans residues Thr986–Lys1006. At Leu1007–Tyr1023 the chain is on the cytoplasmic side.

The protein belongs to the cation transport ATPase (P-type) (TC 3.A.3) family. Type IIC subfamily. In terms of assembly, the sodium/potassium-transporting ATPase is composed of a catalytic alpha subunit, an auxiliary non-catalytic beta subunit and an additional regulatory subunit. Interacts with regulatory subunit FXYD1. Interacts with regulatory subunit FXYD3. Interacts with SIK1. Binds the HLA class II histocompatibility antigen DR1. Interacts with SLC35G1 and STIM1. Interacts with CLN3; this interaction regulates the sodium/potassium-transporting ATPase complex localization at the plasma membrane. Interacts with SCN7A; activates ATP1A1 P-type sodium:potassium-exchanging transporter activity which indirectly signals to nearby neurons to regulate sodium homeostasis. In terms of processing, phosphorylation on Tyr-10 modulates pumping activity. Phosphorylation of Ser-943 by PKA modulates the response of ATP1A1 to PKC. Dephosphorylation by protein phosphatase 2A (PP2A) following increases in intracellular sodium, leading to increase catalytic activity.

It localises to the cell membrane. The protein localises to the basolateral cell membrane. Its subcellular location is the sarcolemma. It is found in the cell projection. The protein resides in the axon. It localises to the melanosome. The catalysed reaction is K(+)(out) + Na(+)(in) + ATP + H2O = K(+)(in) + Na(+)(out) + ADP + phosphate + H(+). This is the catalytic component of the active enzyme, which catalyzes the hydrolysis of ATP coupled with the exchange of sodium and potassium ions across the plasma membrane. This action creates the electrochemical gradient of sodium and potassium ions, providing the energy for active transport of various nutrients. Could also be part of an osmosensory signaling pathway that senses body-fluid sodium levels and controls salt intake behavior as well as voluntary water intake to regulate sodium homeostasis. This chain is Sodium/potassium-transporting ATPase subunit alpha-1 (ATP1A1), found in Homo sapiens (Human).